The sequence spans 233 residues: Purine nucleoside phosphorylase DeoD-type (233 aa).

His4 contributes to the a purine D-ribonucleoside binding site. Residues Gly20, Arg24, Arg43, and 87-90 each bind phosphate; that span reads RVGT. A purine D-ribonucleoside-binding positions include 178–180 and 202–203; these read EME and SD. The active-site Proton donor is Asp203.

It belongs to the PNP/UDP phosphorylase family. In terms of assembly, homohexamer; trimer of homodimers.

The enzyme catalyses a purine D-ribonucleoside + phosphate = a purine nucleobase + alpha-D-ribose 1-phosphate. The catalysed reaction is a purine 2'-deoxy-D-ribonucleoside + phosphate = a purine nucleobase + 2-deoxy-alpha-D-ribose 1-phosphate. Its function is as follows. Catalyzes the reversible phosphorolytic breakdown of the N-glycosidic bond in the beta-(deoxy)ribonucleoside molecules, with the formation of the corresponding free purine bases and pentose-1-phosphate. The chain is Purine nucleoside phosphorylase DeoD-type from Listeria monocytogenes serotype 4b (strain CLIP80459).